The following is a 354-amino-acid chain: S-adenosylmethionine:tRNA ribosyltransferase-isomerase (354 aa).

Belongs to the QueA family. In terms of assembly, monomer.

It localises to the cytoplasm. The catalysed reaction is 7-aminomethyl-7-carbaguanosine(34) in tRNA + S-adenosyl-L-methionine = epoxyqueuosine(34) in tRNA + adenine + L-methionine + 2 H(+). The protein operates within tRNA modification; tRNA-queuosine biosynthesis. Functionally, transfers and isomerizes the ribose moiety from AdoMet to the 7-aminomethyl group of 7-deazaguanine (preQ1-tRNA) to give epoxyqueuosine (oQ-tRNA). This is S-adenosylmethionine:tRNA ribosyltransferase-isomerase from Thermosynechococcus vestitus (strain NIES-2133 / IAM M-273 / BP-1).